Here is a 101-residue protein sequence, read N- to C-terminus: Large ribosomal subunit protein uL23 (101 aa).

The protein belongs to the universal ribosomal protein uL23 family. As to quaternary structure, part of the 50S ribosomal subunit. Contacts protein L29, and trigger factor when it is bound to the ribosome.

Functionally, one of the early assembly proteins it binds 23S rRNA. One of the proteins that surrounds the polypeptide exit tunnel on the outside of the ribosome. Forms the main docking site for trigger factor binding to the ribosome. The protein is Large ribosomal subunit protein uL23 of Pseudarthrobacter chlorophenolicus (strain ATCC 700700 / DSM 12829 / CIP 107037 / JCM 12360 / KCTC 9906 / NCIMB 13794 / A6) (Arthrobacter chlorophenolicus).